The chain runs to 122 residues: Large ribosomal subunit protein uL14 (122 aa).

The protein belongs to the universal ribosomal protein uL14 family. In terms of assembly, part of the 50S ribosomal subunit. Forms a cluster with proteins L3 and L19. In the 70S ribosome, L14 and L19 interact and together make contacts with the 16S rRNA in bridges B5 and B8.

Binds to 23S rRNA. Forms part of two intersubunit bridges in the 70S ribosome. This is Large ribosomal subunit protein uL14 from Bacillus cytotoxicus (strain DSM 22905 / CIP 110041 / 391-98 / NVH 391-98).